Consider the following 312-residue polypeptide: MFSKYLVTASSLFVALTSAASTVDLDALLLLPGVESHDGVDTVFSTKDFYQVSFVKSIAPAIVNSSVIFHDVSRGVAMGNVKSRASIFNPEETYYDWEQYQVVNNGDWRTEWAPASDCIWREEKDNSDETPDRFPISVPYNWTSQYSIVDYDTDANEDNLDFRFIKSLLDKKNWLKKINQTVSQSSIMVAPMIRPYNVVQLWYSKDMVWANVQRQYCSGVYPGGTQCSAWSRYYHVDAPTCDEPVASYMTKMLENEVQCPNERNATTLEPLRLNKQGDSDFSLTFEEEEEEETGSKSLWSTLKKIFSKRSIS.

Residues M1–A19 form the signal peptide.

This is an uncharacterized protein from Saccharomyces cerevisiae (strain ATCC 204508 / S288c) (Baker's yeast).